The chain runs to 27 residues: Chitinase 47 kDa (27 aa).

Positions 3–27 constitute a GH18 domain; the sequence is SKVVGYFTEWGTYDRKYYVKNIEXS.

This sequence belongs to the glycosyl hydrolase 18 family. Chitinase class II subfamily. As to quaternary structure, homodimer.

The enzyme catalyses Random endo-hydrolysis of N-acetyl-beta-D-glucosaminide (1-&gt;4)-beta-linkages in chitin and chitodextrins.. Functionally, able to cleave chitin oligomers from N=3 to 6. The polypeptide is Chitinase 47 kDa (Streptomyces olivaceoviridis (Streptomyces corchorusii)).